The following is a 115-amino-acid chain: Evasin P1182 (115 aa).

The first 26 residues, 1–26 (MALNWSFRVIFVSTMWCALLKFATLG), serve as a signal peptide directing secretion. Cystine bridges form between Cys38/Cys58, Cys54/Cys94, Cys70/Cys99, and Cys89/Cys108. Residues Asn45, Asn72, and Asn103 are each glycosylated (N-linked (GlcNAc...) asparagine).

The protein resides in the secreted. Its function is as follows. Salivary chemokine-binding protein which binds to host chemokines CCL2, CCL3, CCL4, CCL8 and CCL18. This is Evasin P1182 from Amblyomma maculatum (Gulf Coast tick).